Here is a 1621-residue protein sequence, read N- to C-terminus: ABC transporter A family member 2 (1621 aa).

A run of 7 helical transmembrane segments spans residues 30-50 (ILFP…VMAF), 234-254 (SVFI…DLVI), 276-296 (ISWM…ISII), 309-329 (GVVI…AFIL), 338-358 (FCGL…IFVA), 365-385 (GAKL…IFAM), and 405-425 (NQVI…VWYL). One can recognise an ABC transporter 1 domain in the interval 484–717 (ISIRNLRKEY…FGCGYLLTCS (234 aa)). Position 520–527 (520–527 (GPNGSGKS)) interacts with ATP. 7 consecutive transmembrane segments (helical) span residues 856–876 (FFLT…MYKA), 1033–1053 (IVYF…SFAG), 1083–1103 (VWDY…LAGI), 1111–1131 (FGLM…LSYL), 1142–1162 (ATGA…IISL), 1183–1203 (VDIV…LFLV), and 1227–1247 (GSPM…IMIL). Positions 1293–1528 (LQFRNLHKLF…FGAGYTFDVK (236 aa)) constitute an ABC transporter 2 domain. An ATP-binding site is contributed by 1331 to 1338 (GLNGAGKT).

This sequence belongs to the ABC transporter superfamily. ABCA family.

The protein localises to the membrane. In Dictyostelium discoideum (Social amoeba), this protein is ABC transporter A family member 2 (abcA2).